Reading from the N-terminus, the 795-residue chain is Lon protease (795 aa).

The Lon N-terminal domain occupies 17-214 (YPLMPLRDIV…KVYKFLQDEI (198 aa)). Residue 370–377 (GPPGVGKT) coordinates ATP. The 183-residue stretch at 605 to 787 (KPLVGVATGL…EEVFKIALVR (183 aa)) folds into the Lon proteolytic domain. Active-site residues include Ser692 and Lys735.

It belongs to the peptidase S16 family. Homohexamer. Organized in a ring with a central cavity.

The protein localises to the cytoplasm. The enzyme catalyses Hydrolysis of proteins in presence of ATP.. In terms of biological role, ATP-dependent serine protease that mediates the selective degradation of mutant and abnormal proteins as well as certain short-lived regulatory proteins. Required for cellular homeostasis and for survival from DNA damage and developmental changes induced by stress. Degrades polypeptides processively to yield small peptide fragments that are 5 to 10 amino acids long. Binds to DNA in a double-stranded, site-specific manner. The protein is Lon protease of Aquifex aeolicus (strain VF5).